The primary structure comprises 339 residues: Intelectin-1 (339 aa).

The first 18 residues, 1–18 (MLSYSLLLLALAFPAGHA), serve as a signal peptide directing secretion. The Fibrinogen C-terminal domain maps to 58 to 108 (GDMNYGYRSCNEIKSSDSRAPDGIYTLATEDGESYQTFCDMTTNGGGWTLV). Cys-67 and Cys-96 are oxidised to a cystine. His-112, Glu-113, Asn-115, Gly-118, Gly-123, Asp-124, and Asp-159 together coordinate Ca(2+). 3 cysteine pairs are disulfide-bonded: Cys-120-Cys-306, Cys-225-Cys-285, and Cys-277-Cys-291. A glycan (N-linked (GlcNAc...) asparagine) is linked at Asn-189. Residues Asn-286, Glu-288, Glu-300, and Asp-308 each coordinate Ca(2+). A carbohydrate contacts are provided by residues 288-289 (EH) and Glu-300.

As to quaternary structure, homotrimer; disulfide-linked. Homohexamer; disulfide-linked. Forms primarily homotrimers in solution, but can also form homohexamers. Post-translationally, N-glycosylated.

Its subcellular location is the secreted. The protein resides in the cytoplasmic vesicle. The protein localises to the secretory vesicle. Lectin that specifically recognizes microbial carbohydrate chains in a calcium-dependent manner. Binds to microbial glycans that contain a terminal acyclic 1,2-diol moiety, including beta-linked D-galactofuranose (beta-Galf) and D-phosphoglycerol-modified glycans. Binds to S.pneumoniae serotypes with glycans that contain beta-linked D-galactofuranose (beta-Galf) and with D-phosphoglycerol-modified glycans. Can bind a variety of monosaccharides (in vitro). Probably plays a role in the defense system against microorganisms. This is Intelectin-1 (itln1) from Xenopus laevis (African clawed frog).